Consider the following 121-residue polypeptide: uncharacterized protein (121 aa).

A disordered region spans residues 85-111 (NANNDDYESPYKTPKIKSNPSLDSSGS). Residues 100–111 (IKSNPSLDSSGS) show a composition bias toward polar residues.

This is an uncharacterized protein from Dictyostelium discoideum (Social amoeba).